The sequence spans 295 residues: Cop9 signalosome-interactor 1 (295 aa).

In terms of assembly, component of a COP9 signalosome-like (CSN) complex, composed of RRI1/CSN5, CSN9, RRI2/CSN10, PCI8/CSN11, CSN12 and CSI1. In the complex, it probably interacts directly with CSN9 and CSN12. Interacts also with RPN5.

The protein localises to the cytoplasm. The protein resides in the nucleus. Its function is as follows. Component of the COP9 signalosome (CSN) complex that acts as an regulator of the ubiquitin (Ubl) conjugation pathway by mediating the deneddylation of the cullin subunit of SCF-type E3 ubiquitin-protein ligase complexes The CSN complex is involved in the regulation of the mating pheromone response. This is Cop9 signalosome-interactor 1 (CSI1) from Saccharomyces cerevisiae (strain ATCC 204508 / S288c) (Baker's yeast).